A 106-amino-acid chain; its full sequence is Movement protein TGB2 (106 aa).

The Cytoplasmic portion of the chain corresponds to 1-8; sequence MPLTPPPD. A helical membrane pass occupies residues 9-29; it reads YTRVYTALAIGASIAFFTGLI. Over 30 to 73 the chain is Lumenal; that stretch reads TRNTLPSVGDLQHNLPHGGRYRDGTKSVEYCGPRKLNSVESGSR. A helical transmembrane segment spans residues 74-94; that stretch reads WTFQPWLLVIVLVALIIALGR. The Cytoplasmic segment spans residues 95 to 106; it reads QGHNCRACGRSH.

This sequence belongs to the Tymovirales TGBp2 protein family.

It is found in the host endoplasmic reticulum membrane. In terms of biological role, plays a role in viral cell-to-cell propagation, by facilitating genome transport to neighboring plant cells through plasmosdesmata,. This chain is Movement protein TGB2, found in Lilium (LSV).